The chain runs to 290 residues: Glycine--tRNA ligase alpha subunit (290 aa).

This sequence belongs to the class-II aminoacyl-tRNA synthetase family. As to quaternary structure, tetramer of two alpha and two beta subunits.

The protein resides in the cytoplasm. The catalysed reaction is tRNA(Gly) + glycine + ATP = glycyl-tRNA(Gly) + AMP + diphosphate. The chain is Glycine--tRNA ligase alpha subunit from Desulfotalea psychrophila (strain LSv54 / DSM 12343).